Here is a 174-residue protein sequence, read N- to C-terminus: Shikimate kinase 2 (174 aa).

12–17 contacts ATP; the sequence is GCGKTT. Mg(2+)-binding residues include Thr-16 and Asp-32. Substrate-binding residues include Asp-34, Arg-58, and Gly-79. An LID domain region spans residues 112–126; it reads QAAPEEDLRPTLTGK. Arg-120 lines the ATP pocket. Arg-139 serves as a coordination point for substrate.

Belongs to the shikimate kinase family. AroL subfamily. Monomer. Mg(2+) is required as a cofactor.

It localises to the cytoplasm. The catalysed reaction is shikimate + ATP = 3-phosphoshikimate + ADP + H(+). It functions in the pathway metabolic intermediate biosynthesis; chorismate biosynthesis; chorismate from D-erythrose 4-phosphate and phosphoenolpyruvate: step 5/7. Functionally, catalyzes the specific phosphorylation of the 3-hydroxyl group of shikimic acid using ATP as a cosubstrate. The sequence is that of Shikimate kinase 2 from Shigella dysenteriae serotype 1 (strain Sd197).